The sequence spans 198 residues: Glycerol-3-phosphate acyltransferase (198 aa).

6 helical membrane passes run 1-21 (MNLL…GYLA), 53-73 (IIVF…AKYL), 79-99 (WQVA…WLNW), 111-131 (IFLG…IIMI), 136-156 (IVSL…FLSF), and 158-178 (GSNI…LVIW).

Belongs to the PlsY family. In terms of assembly, probably interacts with PlsX.

Its subcellular location is the cell inner membrane. It carries out the reaction an acyl phosphate + sn-glycerol 3-phosphate = a 1-acyl-sn-glycero-3-phosphate + phosphate. It functions in the pathway lipid metabolism; phospholipid metabolism. Its function is as follows. Catalyzes the transfer of an acyl group from acyl-phosphate (acyl-PO(4)) to glycerol-3-phosphate (G3P) to form lysophosphatidic acid (LPA). This enzyme utilizes acyl-phosphate as fatty acyl donor, but not acyl-CoA or acyl-ACP. In Prochlorococcus marinus (strain NATL1A), this protein is Glycerol-3-phosphate acyltransferase.